Reading from the N-terminus, the 257-residue chain is Zinc-finger homeodomain protein 6 (257 aa).

Positions 1–35 (MEFRGHDEPVDEMGVAYGRTPPSSSSSPAASASAG) are disordered. Low complexity predominate over residues 21–35 (PPSSSSSPAASASAG). A ZF-HD dimerization-type; degenerate zinc finger spans residues 45–93 (YHECLRNHAAAMGGHVVDGCGEFMPMPGDAADALKCAACGCHRSFHRKD). Residues 106–125 (PSPPTPRVPLLMPPPQPQPH) are compositionally biased toward pro residues. Disordered stretches follow at residues 106–182 (PSPP…TKFT) and 228–257 (NNKS…QQQQ). A compositionally biased stretch (low complexity) spans 141–155 (YHHTPSGSGGTTTES). A DNA-binding region (homeobox) is located at residues 174–237 (RKRFRTKFTP…NNKSSIGSSS (64 aa)). Low complexity predominate over residues 242–257 (RRQPQEQQSQQQQQQQ).

In terms of assembly, homo- and heterodimer with other ZFHD proteins.

The protein resides in the nucleus. In terms of biological role, putative transcription factor. The chain is Zinc-finger homeodomain protein 6 (ZHD6) from Oryza sativa subsp. indica (Rice).